A 102-amino-acid chain; its full sequence is Large ribosomal subunit protein bL21 (102 aa).

This sequence belongs to the bacterial ribosomal protein bL21 family. As to quaternary structure, part of the 50S ribosomal subunit. Contacts protein L20.

Its function is as follows. This protein binds to 23S rRNA in the presence of protein L20. The protein is Large ribosomal subunit protein bL21 of Phytoplasma australiense.